The following is a 695-amino-acid chain: Pre-mRNA-splicing factor clf-1 (695 aa).

16 HAT repeats span residues 52–84 (EYQG…WELE), 86–118 (KEFA…AEIK), 120–152 (RNIN…VMEM), 154–185 (GDIP…LEKR), 187–218 (GEFD…FEEE), 220–259 (GTSD…YEAR), 261–295 (REYE…FEKQ), 305–337 (VILT…LEES), 339–373 (GDVD…LFLF), 383–419 (KDIG…FEIR), 421–452 (GQLT…LEQK), 454–486 (YEFE…LERG), 488–522 (DDLE…FEEE), 524–555 (GEYE…FEIN), 578–616 (EAKA…FEKT), and 621–654 (EDIE…YIFP).

It belongs to the crooked-neck family. As to quaternary structure, associated with the spliceosome.

It localises to the nucleus. Involved in pre-mRNA splicing and cell cycle progression. Required for the spliceosome assembly and initiation of the DNA replication. The chain is Pre-mRNA-splicing factor clf-1 (clf-1) from Neurospora crassa (strain ATCC 24698 / 74-OR23-1A / CBS 708.71 / DSM 1257 / FGSC 987).